Here is a 325-residue protein sequence, read N- to C-terminus: H-2 class I histocompatibility antigen, Q10 alpha chain (325 aa).

Residues 1–24 (MGAMAPRTLLLLLAAALAPTQTQA) form the signal peptide. Positions 25–114 (GSHSMRYFET…LLGYYNQSES (90 aa)) are alpha-1. The Extracellular segment spans residues 25–310 (GSHSMRYFET…PPSTDSIMSH (286 aa)). The N-linked (GlcNAc...) asparagine glycan is linked to Asn110. The interval 115 to 206 (GSHTIQWMYG…ELGKETLLRT (92 aa)) is alpha-2. Cystine bridges form between Cys125/Cys188 and Cys227/Cys283. Residues 207 to 298 (DPPKTHVTHH…GLPEPLTLRW (92 aa)) are alpha-3. One can recognise an Ig-like C1-type domain in the interval 209–297 (PKTHVTHHPG…EGLPEPLTLR (89 aa)). Asn280 is a glycosylation site (N-linked (GlcNAc...) asparagine). A connecting peptide region spans residues 299-310 (EPPPSTDSIMSH). The chain crosses the membrane as a helical span at residues 311-324 (IADLLWPSLKLWWY).

This sequence belongs to the MHC class I family. Heterodimer of an alpha chain and a beta chain (beta-2-microglobulin).

It is found in the membrane. In terms of biological role, involved in the presentation of foreign antigens to the immune system. The chain is H-2 class I histocompatibility antigen, Q10 alpha chain (H2-Q10) from Mus musculus (Mouse).